We begin with the raw amino-acid sequence, 510 residues long: NAD(P)H-quinone oxidoreductase subunit 2 A, chloroplastic (510 aa).

13 helical membrane passes run 24 to 44, 57 to 77, 99 to 119, 124 to 144, 149 to 169, 183 to 203, 227 to 247, 295 to 315, 323 to 343, 354 to 374, 395 to 415, 418 to 438, and 484 to 504; these read LLLF…GLIL, IPWL…ALLF, IFQF…VEYI, MAIT…MFLC, LITI…LSGY, YLLM…WLYG, PGIS…LSPA, WHLL…LIAI, MLAY…IVGD, YMLF…SFGL, ALSL…AGFF, LHLF…IGLL, and MIVC…IIAI.

It belongs to the complex I subunit 2 family. NDH is composed of at least 16 different subunits, 5 of which are encoded in the nucleus.

The protein resides in the plastid. It localises to the chloroplast thylakoid membrane. It catalyses the reaction a plastoquinone + NADH + (n+1) H(+)(in) = a plastoquinol + NAD(+) + n H(+)(out). The catalysed reaction is a plastoquinone + NADPH + (n+1) H(+)(in) = a plastoquinol + NADP(+) + n H(+)(out). Its function is as follows. NDH shuttles electrons from NAD(P)H:plastoquinone, via FMN and iron-sulfur (Fe-S) centers, to quinones in the photosynthetic chain and possibly in a chloroplast respiratory chain. The immediate electron acceptor for the enzyme in this species is believed to be plastoquinone. Couples the redox reaction to proton translocation, and thus conserves the redox energy in a proton gradient. In Vitis vinifera (Grape), this protein is NAD(P)H-quinone oxidoreductase subunit 2 A, chloroplastic.